The chain runs to 194 residues: Molybdenum cofactor guanylyltransferase (194 aa).

GTP-binding positions include 12–14 (LAG), lysine 25, asparagine 53, aspartate 70, and aspartate 100. Mg(2+) is bound at residue aspartate 100.

This sequence belongs to the MobA family. In terms of assembly, monomer. The cofactor is Mg(2+).

Its subcellular location is the cytoplasm. It carries out the reaction Mo-molybdopterin + GTP + H(+) = Mo-molybdopterin guanine dinucleotide + diphosphate. Functionally, transfers a GMP moiety from GTP to Mo-molybdopterin (Mo-MPT) cofactor (Moco or molybdenum cofactor) to form Mo-molybdopterin guanine dinucleotide (Mo-MGD) cofactor. This is Molybdenum cofactor guanylyltransferase from Aliivibrio salmonicida (strain LFI1238) (Vibrio salmonicida (strain LFI1238)).